The following is a 118-amino-acid chain: uncharacterized protein (118 aa).

It is found in the mitochondrion. This is an uncharacterized protein from Arabidopsis thaliana (Mouse-ear cress).